The chain runs to 367 residues: MTKRNIVDLPEDLVMEILARVPTVTLVRLQSTSKRWNVLIEDKRFAEQHFTNAPRHSLLIMLMTFRVYLVSVDLHTIHNNKVNIISQLRLKDPLSNFLEEVDICNVFHCDGFLLCTTVDNRLVVSNPCSRDTKWIQPRNFYKKFDIFALGKSSCNKYKIMRMDQFYPDRPEFMNYEIYDFNSNSWRVVGKITDWFIPRCMDRGMSVNGNTYWLASTNKDLTSSSFLLGFDFSTERFVRVSLPGDHLSDPVFALAVTREDPKICVAIIQELHIDVWIATTIESTGAASWSKFLSVELANLYERICLDSWMNFLVDQKNKVLVYRDGNYWISNVFLHVVGEDKCIQVDHHDSVSRCSLVVNYVPTLVHI.

Positions 3–53 constitute an F-box domain; it reads KRNIVDLPEDLVMEILARVPTVTLVRLQSTSKRWNVLIEDKRFAEQHFTNA.

The polypeptide is Putative F-box protein At4g10190 (Arabidopsis thaliana (Mouse-ear cress)).